Consider the following 207-residue polypeptide: Probable mediator of RNA polymerase II transcription subunit 19b (207 aa).

The interval 99–207 (DTAPVELPPA…SSKLDEMGAM (109 aa)) is disordered. The segment covering 127-152 (DRKHRKHKDKKEKDREHKKHKHKHKD) has biased composition (basic residues). Residues 153–167 (RIKDKDKDKDRDKKK) are compositionally biased toward basic and acidic residues. A compositionally biased stretch (basic residues) spans 168–179 (EKSGHHDKKRKN).

The protein belongs to the plant Mediator complex subunit 19 family. In terms of assembly, component of the Mediator complex.

The protein localises to the nucleus. Component of the Mediator complex, a coactivator involved in the regulated transcription of nearly all RNA polymerase II-dependent genes. Mediator functions as a bridge to convey information from gene-specific regulatory proteins to the basal RNA polymerase II transcription machinery. The Mediator complex, having a compact conformation in its free form, is recruited to promoters by direct interactions with regulatory proteins and serves for the assembly of a functional preinitiation complex with RNA polymerase II and the general transcription factors. This Arabidopsis thaliana (Mouse-ear cress) protein is Probable mediator of RNA polymerase II transcription subunit 19b (MED19B).